The chain runs to 163 residues: Nucleotide-binding protein Dvul_1191 (163 aa).

This sequence belongs to the YajQ family.

Its function is as follows. Nucleotide-binding protein. The polypeptide is Nucleotide-binding protein Dvul_1191 (Nitratidesulfovibrio vulgaris (strain DP4) (Desulfovibrio vulgaris)).